Consider the following 172-residue polypeptide: Large ribosomal subunit protein uL10 (172 aa).

It belongs to the universal ribosomal protein uL10 family. As to quaternary structure, part of the ribosomal stalk of the 50S ribosomal subunit. The N-terminus interacts with L11 and the large rRNA to form the base of the stalk. The C-terminus forms an elongated spine to which L12 dimers bind in a sequential fashion forming a multimeric L10(L12)X complex.

Functionally, forms part of the ribosomal stalk, playing a central role in the interaction of the ribosome with GTP-bound translation factors. The polypeptide is Large ribosomal subunit protein uL10 (Chlorobium chlorochromatii (strain CaD3)).